Consider the following 101-residue polypeptide: Small ribosomal subunit protein uS14 (101 aa).

The disordered stretch occupies residues 1–20 (MAKTSAVNRNKMRERMASRD). Residues 11-20 (KMRERMASRD) are compositionally biased toward basic and acidic residues.

Belongs to the universal ribosomal protein uS14 family. Part of the 30S ribosomal subunit. Contacts proteins S3 and S10.

Its function is as follows. Binds 16S rRNA, required for the assembly of 30S particles and may also be responsible for determining the conformation of the 16S rRNA at the A site. The polypeptide is Small ribosomal subunit protein uS14 (Granulibacter bethesdensis (strain ATCC BAA-1260 / CGDNIH1)).